Consider the following 191-residue polypeptide: Imidazoleglycerol-phosphate dehydratase (191 aa).

This sequence belongs to the imidazoleglycerol-phosphate dehydratase family.

The protein localises to the cytoplasm. It carries out the reaction D-erythro-1-(imidazol-4-yl)glycerol 3-phosphate = 3-(imidazol-4-yl)-2-oxopropyl phosphate + H2O. It functions in the pathway amino-acid biosynthesis; L-histidine biosynthesis; L-histidine from 5-phospho-alpha-D-ribose 1-diphosphate: step 6/9. The sequence is that of Imidazoleglycerol-phosphate dehydratase from Methanosarcina mazei (strain ATCC BAA-159 / DSM 3647 / Goe1 / Go1 / JCM 11833 / OCM 88) (Methanosarcina frisia).